We begin with the raw amino-acid sequence, 224 residues long: Peptide deformylase 3 (224 aa).

C135 and H177 together coordinate Fe cation. E178 is a catalytic residue. H181 is a binding site for Fe cation.

It belongs to the polypeptide deformylase family. The cofactor is Fe(2+).

The enzyme catalyses N-terminal N-formyl-L-methionyl-[peptide] + H2O = N-terminal L-methionyl-[peptide] + formate. Its function is as follows. Removes the formyl group from the N-terminal Met of newly synthesized proteins. Requires at least a dipeptide for an efficient rate of reaction. N-terminal L-methionine is a prerequisite for activity but the enzyme has broad specificity at other positions. This is Peptide deformylase 3 from Streptomyces avermitilis (strain ATCC 31267 / DSM 46492 / JCM 5070 / NBRC 14893 / NCIMB 12804 / NRRL 8165 / MA-4680).